The sequence spans 84 residues: U4-theraphotoxin-Hhn1a (84 aa).

A signal peptide spans 1-22 (MKVTLIAILTCAAVLVLHTTAA). Residues 23–47 (EELEESQLMEVGMPDTELAAVDEER) constitute a propeptide that is removed on maturation. Cystine bridges form between cysteine 51/cysteine 65, cysteine 55/cysteine 76, and cysteine 70/cysteine 81.

It belongs to the neurotoxin 12 (Hwtx-2) family. 02 (Hwtx-2) subfamily. Expressed by the venom gland.

The protein localises to the secreted. Functionally, postsynaptic neurotoxin. This Cyriopagopus hainanus (Chinese bird spider) protein is U4-theraphotoxin-Hhn1a.